A 391-amino-acid chain; its full sequence is Cytochrome P450 165A3 (391 aa).

The interval 1-22 is disordered; sequence MFEEKNALRGTEIHRRERFDPG. Residue C342 coordinates heme.

This sequence belongs to the cytochrome P450 family. Heme is required as a cofactor.

It participates in antibiotic biosynthesis; vancomycin biosynthesis. Functionally, involved in the coupling of aromatic side chains of the heptapeptide of vancomycin. The polypeptide is Cytochrome P450 165A3 (cyp165A3) (Amycolatopsis orientalis (Nocardia orientalis)).